A 180-amino-acid polypeptide reads, in one-letter code: uncharacterized protein (180 aa).

The interval 1–93 (MPSSVPKTSI…LPRRRNPGWV (93 aa)) is disordered. 2 stretches are compositionally biased toward low complexity: residues 9 to 25 (SIES…SQAS) and 47 to 64 (LTSS…SSSQ).

This is an uncharacterized protein from Homo sapiens (Human).